The sequence spans 182 residues: UPF0316 protein Sde_0566 (182 aa).

The next 3 membrane-spanning stretches (helical) occupy residues 7 to 27 (VAPELLALLIFVSRVIDVSLG), 41 to 61 (LAAFIGFFEIMIWLVAAGQVF), and 67 to 87 (WYLALAYAGGFSMGNYVGMWI).

Belongs to the UPF0316 family.

The protein localises to the cell membrane. The sequence is that of UPF0316 protein Sde_0566 from Saccharophagus degradans (strain 2-40 / ATCC 43961 / DSM 17024).